Reading from the N-terminus, the 243-residue chain is Type III pantothenate kinase (243 aa).

Residue 7-14 (DLGNSRFK) participates in ATP binding. Substrate contacts are provided by residues tyrosine 91 and 98–101 (GVDR). The active-site Proton acceptor is aspartate 100. Residue threonine 122 participates in ATP binding. Threonine 172 contacts substrate.

It belongs to the type III pantothenate kinase family. In terms of assembly, homodimer. Requires NH4(+) as cofactor. K(+) serves as cofactor.

Its subcellular location is the cytoplasm. It carries out the reaction (R)-pantothenate + ATP = (R)-4'-phosphopantothenate + ADP + H(+). Its pathway is cofactor biosynthesis; coenzyme A biosynthesis; CoA from (R)-pantothenate: step 1/5. In terms of biological role, catalyzes the phosphorylation of pantothenate (Pan), the first step in CoA biosynthesis. In Stenotrophomonas maltophilia (strain R551-3), this protein is Type III pantothenate kinase.